A 590-amino-acid chain; its full sequence is Aspartate--tRNA(Asp/Asn) ligase (590 aa).

Glutamate 175 is an L-aspartate binding site. The aspartate stretch occupies residues 199–202 (QQYK). The L-aspartate site is built by arginine 221 and histidine 450. 221–223 (RDE) provides a ligand contact to ATP. Glutamate 484 contributes to the ATP binding site. Arginine 491 serves as a coordination point for L-aspartate. Residue 536 to 539 (GIDR) participates in ATP binding.

This sequence belongs to the class-II aminoacyl-tRNA synthetase family. Type 1 subfamily. As to quaternary structure, homodimer.

The protein resides in the cytoplasm. The catalysed reaction is tRNA(Asx) + L-aspartate + ATP = L-aspartyl-tRNA(Asx) + AMP + diphosphate. Its function is as follows. Aspartyl-tRNA synthetase with relaxed tRNA specificity since it is able to aspartylate not only its cognate tRNA(Asp) but also tRNA(Asn). Reaction proceeds in two steps: L-aspartate is first activated by ATP to form Asp-AMP and then transferred to the acceptor end of tRNA(Asp/Asn). This Azorhizobium caulinodans (strain ATCC 43989 / DSM 5975 / JCM 20966 / LMG 6465 / NBRC 14845 / NCIMB 13405 / ORS 571) protein is Aspartate--tRNA(Asp/Asn) ligase.